The sequence spans 276 residues: Secreted RxLR effector protein 85 (276 aa).

A signal peptide spans 1–27; it reads MRYCAFRLGLFFIGYSCCVLLSTPTLA. Positions 110 to 113 match the RxLR motif; sequence RQLR.

Belongs to the RxLR effector family.

The protein localises to the secreted. It localises to the host cell membrane. Its function is as follows. Secreted effector that partially suppresses the host cell death induced by cell death-inducing proteins. The polypeptide is Secreted RxLR effector protein 85 (Plasmopara viticola (Downy mildew of grapevine)).